The following is a 160-amino-acid chain: ATP synthase subunit b 3 (160 aa).

A helical membrane pass occupies residues 5–25; sequence PTFWVLVAFVLFVAAVWRIAA.

Belongs to the ATPase B chain family. F-type ATPases have 2 components, F(1) - the catalytic core - and F(0) - the membrane proton channel. F(1) has five subunits: alpha(3), beta(3), gamma(1), delta(1), epsilon(1). F(0) has three main subunits: a(1), b(2) and c(10-14). The alpha and beta chains form an alternating ring which encloses part of the gamma chain. F(1) is attached to F(0) by a central stalk formed by the gamma and epsilon chains, while a peripheral stalk is formed by the delta and b chains.

It is found in the cell inner membrane. Functionally, f(1)F(0) ATP synthase produces ATP from ADP in the presence of a proton or sodium gradient. F-type ATPases consist of two structural domains, F(1) containing the extramembraneous catalytic core and F(0) containing the membrane proton channel, linked together by a central stalk and a peripheral stalk. During catalysis, ATP synthesis in the catalytic domain of F(1) is coupled via a rotary mechanism of the central stalk subunits to proton translocation. In terms of biological role, component of the F(0) channel, it forms part of the peripheral stalk, linking F(1) to F(0). The protein is ATP synthase subunit b 3 of Rhodospirillum centenum (strain ATCC 51521 / SW).